We begin with the raw amino-acid sequence, 193 residues long: Holliday junction branch migration complex subunit RuvA (193 aa).

The interval 1 to 64 (MITSLTGTIL…EDAHLLYGFM (64 aa)) is domain I. Residues 65-139 (TVAERDMFRL…DKMGGIAPGP (75 aa)) form a domain II region. The tract at residues 139-143 (PMGRG) is flexible linker. The segment at 144-193 (GAGDPRQEAIAALLTLGYKPAQASQAIAGLADGLGLEDLIRQSLQNLSRH) is domain III.

The protein belongs to the RuvA family. In terms of assembly, homotetramer. Forms an RuvA(8)-RuvB(12)-Holliday junction (HJ) complex. HJ DNA is sandwiched between 2 RuvA tetramers; dsDNA enters through RuvA and exits via RuvB. An RuvB hexamer assembles on each DNA strand where it exits the tetramer. Each RuvB hexamer is contacted by two RuvA subunits (via domain III) on 2 adjacent RuvB subunits; this complex drives branch migration. In the full resolvosome a probable DNA-RuvA(4)-RuvB(12)-RuvC(2) complex forms which resolves the HJ.

It is found in the cytoplasm. Functionally, the RuvA-RuvB-RuvC complex processes Holliday junction (HJ) DNA during genetic recombination and DNA repair, while the RuvA-RuvB complex plays an important role in the rescue of blocked DNA replication forks via replication fork reversal (RFR). RuvA specifically binds to HJ cruciform DNA, conferring on it an open structure. The RuvB hexamer acts as an ATP-dependent pump, pulling dsDNA into and through the RuvAB complex. HJ branch migration allows RuvC to scan DNA until it finds its consensus sequence, where it cleaves and resolves the cruciform DNA. This Acidithiobacillus ferrooxidans (strain ATCC 53993 / BNL-5-31) (Leptospirillum ferrooxidans (ATCC 53993)) protein is Holliday junction branch migration complex subunit RuvA.